Here is an 82-residue protein sequence, read N- to C-terminus: Small ribosomal subunit protein bS16 (82 aa).

The protein belongs to the bacterial ribosomal protein bS16 family.

The protein is Small ribosomal subunit protein bS16 of Bdellovibrio bacteriovorus (strain ATCC 15356 / DSM 50701 / NCIMB 9529 / HD100).